A 523-amino-acid chain; its full sequence is 2-isopropylmalate synthase (523 aa).

The region spanning 5–267 (VIIFDTTLRD…HTAINHQEIW (263 aa)) is the Pyruvate carboxyltransferase domain. Mn(2+)-binding residues include Asp-14, His-202, His-204, and Asn-238. The regulatory domain stretch occupies residues 392 to 523 (RLDYFSVQSG…QHNENNKETV (132 aa)).

This sequence belongs to the alpha-IPM synthase/homocitrate synthase family. LeuA type 1 subfamily. As to quaternary structure, homodimer. Mn(2+) serves as cofactor.

The protein resides in the cytoplasm. It carries out the reaction 3-methyl-2-oxobutanoate + acetyl-CoA + H2O = (2S)-2-isopropylmalate + CoA + H(+). It participates in amino-acid biosynthesis; L-leucine biosynthesis; L-leucine from 3-methyl-2-oxobutanoate: step 1/4. In terms of biological role, catalyzes the condensation of the acetyl group of acetyl-CoA with 3-methyl-2-oxobutanoate (2-ketoisovalerate) to form 3-carboxy-3-hydroxy-4-methylpentanoate (2-isopropylmalate). The protein is 2-isopropylmalate synthase of Escherichia coli (strain K12 / MC4100 / BW2952).